Reading from the N-terminus, the 456-residue chain is Argininosuccinate lyase (456 aa).

It belongs to the lyase 1 family. Argininosuccinate lyase subfamily.

The protein resides in the cytoplasm. The enzyme catalyses 2-(N(omega)-L-arginino)succinate = fumarate + L-arginine. It functions in the pathway amino-acid biosynthesis; L-arginine biosynthesis; L-arginine from L-ornithine and carbamoyl phosphate: step 3/3. The chain is Argininosuccinate lyase from Shewanella amazonensis (strain ATCC BAA-1098 / SB2B).